We begin with the raw amino-acid sequence, 223 residues long: MPKKFQGENTKSAAARARRAEAKAAADAKKQKELEDAYWRDEDKHVMRKEQRKEEKEKRRLEQLERKKETQRLLEEEDSKLKGGKAPRVAASSKVTRAQIEETLRRDHQHKESPDPAEKAKSHLEVPLEENVNRRVLEEGSVEARTIEDAIAVLSVTEEAVDRHPERRMRAAYTAFEEAQLPRLKQENPNMRLSQLKQMLKKEWLRSPDNPMNQRAVPFNTPK.

Residues 1 to 126 (MPKKFQGENT…AEKAKSHLEV (126 aa)) are disordered. Residues 15–82 (ARARRAEAKA…LLEEEDSKLK (68 aa)) are a coiled coil. Composition is skewed to basic and acidic residues over residues 18 to 74 (RRAE…QRLL) and 99 to 126 (QIEE…HLEV). Phosphoserine is present on residues serine 141 and serine 194.

Belongs to the CCDC124 family. As to quaternary structure, associates with translationally inactive ribosomes in the nonrotated state. Interacts with RASGEF1B.

The protein resides in the cytoplasm. It localises to the cytoskeleton. Its subcellular location is the microtubule organizing center. It is found in the centrosome. The protein localises to the midbody. Its function is as follows. Ribosome-binding protein involved in ribosome hibernation: associates with translationally inactive ribosomes and stabilizes the nonrotated conformation of the 80S ribosome, thereby promoting ribosome preservation and storage. Also required for proper progression of late cytokinetic stages. This Bos taurus (Bovine) protein is Coiled-coil domain-containing protein 124 (CCDC124).